A 65-amino-acid polypeptide reads, in one-letter code: Large ribosomal subunit protein bL35 (65 aa).

Positions 1–10 (MPKMKSKSSA) are enriched in basic residues. The interval 1–21 (MPKMKSKSSAKMRFSVRAGGT) is disordered.

The protein belongs to the bacterial ribosomal protein bL35 family.

This chain is Large ribosomal subunit protein bL35, found in Polynucleobacter necessarius subsp. necessarius (strain STIR1).